The chain runs to 51 residues: uncharacterized protein (51 aa).

A disordered region spans residues 1 to 51 (MARTNVKLCPPKRSKRPSNSRSKSTSHSNRRSLNSLRRTRTSRRSNNGKFT). Low complexity predominate over residues 19-36 (NSRSKSTSHSNRRSLNSL).

This is an uncharacterized protein from Bdellovibrio bacteriovorus (Bacteriophage phiMH2K).